Here is a 436-residue protein sequence, read N- to C-terminus: Phosphomethylpyrimidine synthase (436 aa).

Substrate contacts are provided by residues Asn69, Met98, Tyr127, His163, 185-187 (SRG), 226-229 (DACR), and Glu265. Residue His269 participates in Zn(2+) binding. Position 292 (Tyr292) interacts with substrate. His333 provides a ligand contact to Zn(2+). Positions 409, 412, and 416 each coordinate [4Fe-4S] cluster.

This sequence belongs to the ThiC family. It depends on [4Fe-4S] cluster as a cofactor.

It catalyses the reaction 5-amino-1-(5-phospho-beta-D-ribosyl)imidazole + S-adenosyl-L-methionine = 4-amino-2-methyl-5-(phosphooxymethyl)pyrimidine + CO + 5'-deoxyadenosine + formate + L-methionine + 3 H(+). It functions in the pathway cofactor biosynthesis; thiamine diphosphate biosynthesis. Its function is as follows. Catalyzes the synthesis of the hydroxymethylpyrimidine phosphate (HMP-P) moiety of thiamine from aminoimidazole ribotide (AIR) in a radical S-adenosyl-L-methionine (SAM)-dependent reaction. The protein is Phosphomethylpyrimidine synthase of Clostridium perfringens (strain ATCC 13124 / DSM 756 / JCM 1290 / NCIMB 6125 / NCTC 8237 / Type A).